A 417-amino-acid chain; its full sequence is Membrane protein UL43 (417 aa).

Residues 1-21 (MLRNDSHRAVSPEDGQGRVDD) form a disordered region. A run of 5 helical transmembrane segments spans residues 57–77 (GPYA…LGFM), 90–110 (IYAW…SLGE), 119–139 (APGP…LLVL), 146–166 (LFLL…VGGL), and 175–195 (WWIG…GPGA). Residues 217 to 254 (AGESLSRRPPEDPERPGVPGPPSPPTPQRSHGPPADEV) are disordered. The span at 221–231 (LSRRPPEDPER) shows a compositional bias: basic and acidic residues. Positions 232-243 (PGVPGPPSPPTP) are enriched in pro residues. The next 5 helical transmembrane spans lie at 263-283 (ENVW…VKTV), 291-311 (PGPG…AVAL), 323-343 (LTDP…GLVF), 348-368 (VVVY…VLGL), and 389-409 (GLFF…CPPG).

It belongs to the alphaherpesvirinae HHV-1 UL43 family.

It localises to the membrane. This is Membrane protein UL43 from Human herpesvirus 1 (strain 17) (HHV-1).